A 282-amino-acid chain; its full sequence is B3 domain-containing protein At5g25475 (282 aa).

The TF-B3 DNA-binding region spans 20-114 (WKSLSPGQTW…NLEVQIFKNN (95 aa)). The disordered stretch occupies residues 127–178 (PETEPFHPTPKKPHKETTPASSFASGSGCSANGGTNGRGKQRSSDVKNPERY). Low complexity predominate over residues 144–159 (TPASSFASGSGCSANG).

The protein localises to the nucleus. This is B3 domain-containing protein At5g25475 from Arabidopsis thaliana (Mouse-ear cress).